A 291-amino-acid chain; its full sequence is Ribosomal large subunit pseudouridine synthase B (291 aa).

The S4 RNA-binding domain occupies 3–63; it reads EKLQKVLARA…GHLISVKESA (61 aa). Aspartate 110 (nucleophile) is an active-site residue. The tract at residues 272-291 is disordered; it reads VKRHSQIAGGRRSGGRNNNG.

Belongs to the pseudouridine synthase RsuA family.

It carries out the reaction uridine(2605) in 23S rRNA = pseudouridine(2605) in 23S rRNA. Responsible for synthesis of pseudouridine from uracil-2605 in 23S ribosomal RNA. The protein is Ribosomal large subunit pseudouridine synthase B (rluB) of Salmonella typhi.